The sequence spans 886 residues: Alanine--tRNA ligase (886 aa).

Residues histidine 570, histidine 574, cysteine 672, and histidine 676 each contribute to the Zn(2+) site.

Belongs to the class-II aminoacyl-tRNA synthetase family. Zn(2+) is required as a cofactor.

It is found in the cytoplasm. The enzyme catalyses tRNA(Ala) + L-alanine + ATP = L-alanyl-tRNA(Ala) + AMP + diphosphate. Its function is as follows. Catalyzes the attachment of alanine to tRNA(Ala) in a two-step reaction: alanine is first activated by ATP to form Ala-AMP and then transferred to the acceptor end of tRNA(Ala). Also edits incorrectly charged Ser-tRNA(Ala) and Gly-tRNA(Ala) via its editing domain. In Acidothermus cellulolyticus (strain ATCC 43068 / DSM 8971 / 11B), this protein is Alanine--tRNA ligase.